Consider the following 398-residue polypeptide: Phosphoglycerate kinase (398 aa).

Residues D21–N23, R36, H59–R62, R118, and R151 each bind substrate. Residues K201, E323, and G353–T356 contribute to the ATP site.

This sequence belongs to the phosphoglycerate kinase family. In terms of assembly, monomer.

It localises to the cytoplasm. The enzyme catalyses (2R)-3-phosphoglycerate + ATP = (2R)-3-phospho-glyceroyl phosphate + ADP. It functions in the pathway carbohydrate degradation; glycolysis; pyruvate from D-glyceraldehyde 3-phosphate: step 2/5. In Ruegeria pomeroyi (strain ATCC 700808 / DSM 15171 / DSS-3) (Silicibacter pomeroyi), this protein is Phosphoglycerate kinase.